The chain runs to 568 residues: Proline--tRNA ligase (568 aa).

It belongs to the class-II aminoacyl-tRNA synthetase family. ProS type 1 subfamily. As to quaternary structure, homodimer.

It localises to the cytoplasm. The catalysed reaction is tRNA(Pro) + L-proline + ATP = L-prolyl-tRNA(Pro) + AMP + diphosphate. Catalyzes the attachment of proline to tRNA(Pro) in a two-step reaction: proline is first activated by ATP to form Pro-AMP and then transferred to the acceptor end of tRNA(Pro). As ProRS can inadvertently accommodate and process non-cognate amino acids such as alanine and cysteine, to avoid such errors it has two additional distinct editing activities against alanine. One activity is designated as 'pretransfer' editing and involves the tRNA(Pro)-independent hydrolysis of activated Ala-AMP. The other activity is designated 'posttransfer' editing and involves deacylation of mischarged Ala-tRNA(Pro). The misacylated Cys-tRNA(Pro) is not edited by ProRS. This Campylobacter jejuni subsp. jejuni serotype O:6 (strain 81116 / NCTC 11828) protein is Proline--tRNA ligase.